A 1685-amino-acid polypeptide reads, in one-letter code: Myomesin-1 (1685 aa).

A disordered region spans residues 33 to 80; sequence KKRSAVYTQGSTAYSSRSSAAHRRESEAFRRASASSSQQQASQHALSS. 2 stretches are compositionally biased toward low complexity: residues 41-51 and 63-80; these read QGSTAYSSRSS and RASA…ALSS. Ser113 is subject to Phosphoserine. Residues 177–244 form a disordered region; that stretch reads GITTSKQSTA…TSEKKSRKVV (68 aa). The span at 179–220 shows a compositional bias: low complexity; the sequence is TTSKQSTASKQTTASKQSTASKQSTASKQSTASRQSTASRQS. 6 tandem repeats follow at residues 182 to 187, 188 to 193, 194 to 199, 200 to 205, 206 to 211, and 212 to 217. The 6 X 6 AA tandem repeats stretch occupies residues 182–217; sequence KQSTASKQTTASKQSTASKQSTASKQSTASRQSTAS. Positions 221–233 are enriched in polar residues; that stretch reads VVSKQATSALQQE. Ig-like C2-type domains follow at residues 277–368 and 396–498; these read PEFI…ASVV and PYGY…AYVF. 3 consecutive Fibronectin type-III domains span residues 512-607, 640-734, and 741-834; these read APLD…ALDP, PPTD…VVGD, and APGK…VKAA. The segment at 840-938 is disordered; sequence SPDVCPALSD…TDRAPPSPPC (99 aa). Residues 874 to 888 show a composition bias toward low complexity; it reads LLGSKPNKPSLPSSS. Ser883 and Ser887 each carry phosphoserine. Residues 889-902 are compositionally biased toward polar residues; it reads QNLGQTEVSKVSET. A compositionally biased stretch (basic and acidic residues) spans 920–931; that stretch reads SKSDPLKKKTDR. 2 consecutive Fibronectin type-III domains span residues 933–1034 and 1041–1140; these read PPSP…CEEW and PPHS…TRPG. A Phosphoserine modification is found at Ser1054. Ig-like C2-type domains follow at residues 1132-1230, 1358-1444, and 1573-1662; these read PVVA…EELK, PHFV…LKLV, and RVLG…FTVS. Cys1160 and Cys1210 are oxidised to a cystine.

In terms of assembly, homodimer. Interacts with TTN/titin. Interacts with PNKD.

It localises to the cytoplasm. The protein localises to the myofibril. It is found in the sarcomere. Its subcellular location is the m line. Major component of the vertebrate myofibrillar M band. Binds myosin, titin, and light meromyosin. This binding is dose dependent. This chain is Myomesin-1 (MYOM1), found in Homo sapiens (Human).